A 277-amino-acid polypeptide reads, in one-letter code: Large ribosomal subunit protein uL2c (277 aa).

Residues 228–254 (VDHPHGGGEGRCPVGHAQPRTPWGKPA) are disordered.

Belongs to the universal ribosomal protein uL2 family. Part of the 50S ribosomal subunit.

It is found in the plastid. The protein localises to the chloroplast. The protein is Large ribosomal subunit protein uL2c (rpl2) of Ostreococcus tauri.